Reading from the N-terminus, the 317-residue chain is MVSFASETKKELTNLEMKECCEKAELSALLRMNGSLSFSNRRLSIDIQTENAAIARRIYTLLKKGYDVTVELLVRKKMRLKKNNVYIVRLVEKSREILADLHIVRDDFSFIRNISQELIEKKCCKRSYLRGAFLAGGSVNNPETSSYHLEIFSLYKEHNDAICELMNGFDLNSKTLERRKGYITYLKEAEKITEFLNIIGAHNALLRFEDIRIVRDMRNSVNRLVNCETANLNKTIGAALRQIENIRYIDETVGLDILPDKLREIAQLRRDYQDVTLKELGEMVSGGKISKSGINHRLRKIDDIAEKLRAGETVAKK.

Residues 276-310 constitute a DNA-binding region (H-T-H motif); sequence TLKELGEMVSGGKISKSGINHRLRKIDDIAEKLRA.

Belongs to the WhiA family.

In terms of biological role, involved in cell division and chromosome segregation. This is Probable cell division protein WhiA from Bacillus thuringiensis (strain Al Hakam).